The chain runs to 645 residues: MTDTKTPTLDRVAGPADLRSMSDTELRNVADELRAEVVEAVSQTGGHLGSSLGVVELSVAIHAVFDTPRDKLVWDVGHQCYPHKILTGRRKQMPTLRQGGGISGFTKRSESEYDPFGAAHSSTSISAALGFTISRDMGQPTGDAVAVIGDGSISAGMAYEAMNNAGHEGRRMFVILNDNEMSIAPPVGAMSSYLSSLSELSRAGPFGGLVAIAEGMEQLAPKPVRDGARRARELVTGLENRGTFFEELGFDYIGPIDGHDMAQLLSVLRGAKARATGPVLIHCCTVKGKGYAPAEGSADKYHGVSKFDVGTGVQAKAKANAPSYTAVFGDALTTLAEEDPSVVAVTAAMPSGTGVDRMAKRFPNRVFDVGIAEQHGVTFAAAMAATGLKPFCAIYSTFLQRGYDQIVHDVALQGLPVRFAIDRAGLVGADGATHAGSFDIGYLGALPGMVVMAAADEAELVHMVATAGAHNDGPIAFRYPRGNGTGVPLPETGRVLEIGKGRMIREGDGEVAILSLGTLLSDCEAAARILEAEGINATIADARFAKPLDMALIANLVQTHKALITVEQGAMAGFGAMVLQSMAAEGLLDLGCKVRTMCLPDRFIDQAAPAEMYRDAGLDTMGIVEQVTRVLGRDLKVVTLNAKRR.

Residues 1–20 (MTDTKTPTLDRVAGPADLRS) form a disordered region. Residues His-78 and 119–121 (AHS) contribute to the thiamine diphosphate site. Residue Asp-150 participates in Mg(2+) binding. Thiamine diphosphate contacts are provided by residues 151 to 152 (GS), Asn-179, Tyr-291, and Glu-373. A Mg(2+)-binding site is contributed by Asn-179.

It belongs to the transketolase family. DXPS subfamily. In terms of assembly, homodimer. It depends on Mg(2+) as a cofactor. Thiamine diphosphate serves as cofactor.

It catalyses the reaction D-glyceraldehyde 3-phosphate + pyruvate + H(+) = 1-deoxy-D-xylulose 5-phosphate + CO2. The protein operates within metabolic intermediate biosynthesis; 1-deoxy-D-xylulose 5-phosphate biosynthesis; 1-deoxy-D-xylulose 5-phosphate from D-glyceraldehyde 3-phosphate and pyruvate: step 1/1. Its function is as follows. Catalyzes the acyloin condensation reaction between C atoms 2 and 3 of pyruvate and glyceraldehyde 3-phosphate to yield 1-deoxy-D-xylulose-5-phosphate (DXP). This Roseobacter denitrificans (strain ATCC 33942 / OCh 114) (Erythrobacter sp. (strain OCh 114)) protein is 1-deoxy-D-xylulose-5-phosphate synthase 1.